Consider the following 226-residue polypeptide: Lipoprotein-releasing system ATP-binding protein LolD 1 (226 aa).

An ABC transporter domain is found at 6–226 (LRLDKVTRSF…TLREGKVVAA (221 aa)). Residue 42 to 49 (GPSGAGKS) coordinates ATP.

This sequence belongs to the ABC transporter superfamily. Lipoprotein translocase (TC 3.A.1.125) family. In terms of assembly, the complex is composed of two ATP-binding proteins (LolD) and two transmembrane proteins (LolC and LolE).

It localises to the cell inner membrane. In terms of biological role, part of the ABC transporter complex LolCDE involved in the translocation of mature outer membrane-directed lipoproteins, from the inner membrane to the periplasmic chaperone, LolA. Responsible for the formation of the LolA-lipoprotein complex in an ATP-dependent manner. The sequence is that of Lipoprotein-releasing system ATP-binding protein LolD 1 from Rhodospirillum rubrum (strain ATCC 11170 / ATH 1.1.1 / DSM 467 / LMG 4362 / NCIMB 8255 / S1).